Reading from the N-terminus, the 884-residue chain is MGTPTPYSAHSPRDSESSYFSHTSPPHGEHEHDEQEQSLLERNNSSHYGTPFDDPAVSTDSLRRYTLHDDGPAVFAAPPYQESEAASENTFRARSNGDKASREGSRAGALRRYGTRKINLVQGSVLSVDYPVPSAIQNAIQPQYRDAEEAFSEEFTHMRYTAATCDPDEFTLRNGYNLRPAIYNRHTELLIAITYYNEDKVLTARTLHGVMQNIRDIVNLKKSEFWNKGGPAWQKIVVCLVFDGIEPCDKNTLDVLATIGIYQDGVMKKDVDGRETVAHVFEYTTQLSVTPTQQLIRPQGNESTNLPPVQMIFCLKQKNSKKINSHRWLFNAFSRILNPEVVILLDAGTKPGHKSLLALWEAFYNDKTLGGACGEIHAMLGQGWRKVINPLVAAQNFEYKISNILDKPLESAFGYVSVLPGAFSAYRYRAIMGRPLEQYFHGDHTLSKRLGKKGIDGMNIFKKNMFLAEDRILCFELVAKAGFKWHLSYVKASKGETDVPEGAAEFISQRRRWLNGSFAAGLYAIMHFGRIYRSGHSIIRMFFLHIQMLYNVCQLIMTWFSLASYWLTSSVIMDLVGTPSTSNKNKGWPWGNEASPIVNNFVKYGYVWVLTLQFIMALGNRPKGVKIPYILSYLYFSLVQLYVLILSFYLVVGAFNGGMMDFNFDEGVGTFLSSFFSSSGGGIVLIALVSTYGIYIIASVLYMDPWHIITSSWAYFLGMTTSINILMVYAFCNWHDVSWGTKGSDKAEALPSAQTKKDDDNKQNFIEEIDKPQADIDSQFEATVKRALTPWIEPEEEGGKSLDDAYRNFRTVLVCLWVFSNLLVTLLITATGVDKMCLTNTSTTRTSWYFEVILWITAGLSLFRFIGSLWFLGRSGILCCVSRR.

Disordered regions lie at residues 1–58 (MGTP…PAVS) and 73–108 (AVFA…SRAG). 2 stretches are compositionally biased toward polar residues: residues 37 to 48 (QSLLERNNSSHY) and 84 to 93 (EAASENTFRA). The N-linked (GlcNAc...) asparagine glycan is linked to asparagine 44. Over residues 95-105 (SNGDKASREGS) the composition is skewed to basic and acidic residues. Residue asparagine 301 is glycosylated (N-linked (GlcNAc...) asparagine). 7 helical membrane-spanning segments follow: residues 513–532 (WLNG…GRIY), 556–576 (IMTW…MDLV), 597–617 (IVNN…FIMA), 635–655 (YFSL…VGAF), 681–701 (GGIV…ASVL), 708–728 (IITS…ILMV), and 812–832 (VLVC…TATG). Asparagine 840 carries N-linked (GlcNAc...) asparagine glycosylation. A helical transmembrane segment spans residues 852 to 872 (VILWITAGLSLFRFIGSLWFL).

Belongs to the chitin synthase family. Class III subfamily.

It is found in the cell membrane. The enzyme catalyses [(1-&gt;4)-N-acetyl-beta-D-glucosaminyl](n) + UDP-N-acetyl-alpha-D-glucosamine = [(1-&gt;4)-N-acetyl-beta-D-glucosaminyl](n+1) + UDP + H(+). Functionally, polymerizes chitin, a structural polymer of the cell wall and septum, by transferring the sugar moiety of UDP-GlcNAc to the non-reducing end of the growing chitin polymer. Plays an important role in septal growth or maintenance. Mediates colony spore formation. ChsE and chsD seem to play a functionally redundant role in lateral cell wall chitin synthesis. Involved in resistance to echinocandins. The polypeptide is Chitin synthase E (Aspergillus niger (strain ATCC MYA-4892 / CBS 513.88 / FGSC A1513)).